Here is a 362-residue protein sequence, read N- to C-terminus: Spermidine/putrescine import ATP-binding protein PotA (362 aa).

The region spanning 6-237 (ISFKHVVKSY…PINHYVADFI (232 aa)) is the ABC transporter domain. Residue 39-46 (GPSGCGKT) coordinates ATP.

The protein belongs to the ABC transporter superfamily. Spermidine/putrescine importer (TC 3.A.1.11.1) family. The complex is composed of two ATP-binding proteins (PotA), two transmembrane proteins (PotB and PotC) and a solute-binding protein (PotD).

The protein localises to the cell membrane. The enzyme catalyses ATP + H2O + polyamine-[polyamine-binding protein]Side 1 = ADP + phosphate + polyamineSide 2 + [polyamine-binding protein]Side 1.. Its function is as follows. Part of the ABC transporter complex PotABCD involved in spermidine/putrescine import. Responsible for energy coupling to the transport system. In Ligilactobacillus salivarius (strain UCC118) (Lactobacillus salivarius), this protein is Spermidine/putrescine import ATP-binding protein PotA.